A 746-amino-acid polypeptide reads, in one-letter code: Histone-lysine N-methyltransferase EZH2 (746 aa).

The tract at residues 1–340 is interaction with DNMT1, DNMT3A and DNMT3B; it reads MGQTGKKSEK…AKEFAAALTA (340 aa). At Ser21 the chain carries Phosphoserine; by PKB/AKT1. The tract at residues 39–68 is interaction with EED; that stretch reads KSMFSSNRQKILERTEILNQEWKQRRIQPV. An O-linked (GlcNAc) serine glycan is attached at Ser75. Ser76 carries the post-translational modification Phosphoserine. Residues 180-222 are disordered; sequence QYNDDDDDDDGDDPEEREEKQKDLEDHRDDKESRPPRKFPSDK. A compositionally biased stretch (acidic residues) spans 182-195; the sequence is NDDDDDDDGDDPEE. A compositionally biased stretch (basic and acidic residues) spans 196–222; sequence REEKQKDLEDHRDDKESRPPRKFPSDK. The segment at 329–522 is interaction with CDYL; that stretch reads EGAKEFAAAL…SSNHVYNYQP (194 aa). Thr339 carries the phosphothreonine modification. The disordered stretch occupies residues 340–426; that stretch reads AERIKTPPKR…PIKMKPNIEP (87 aa). The residue at position 345 (Thr345) is a Phosphothreonine; by CDK1 and CDK2. Over residues 345 to 357 the composition is skewed to basic residues; that stretch reads TPPKRPGGRRRGR. A phosphoserine mark is found at Ser363 and Ser366. Thr367 carries the post-translational modification Phosphothreonine. Over residues 374–385 the composition is skewed to basic and acidic residues; it reads ESKDTDSDREAG. The residue at position 487 (Thr487) is a Phosphothreonine. The CXC domain maps to 503–605; sequence CRKIQLKKDG…SKNVSCKNCS (103 aa). In terms of domain architecture, SET spans 612–727; the sequence is KHLLLAPSDV…TGEELFFDYR (116 aa). Lys634 participates in a covalent cross-link: Glycyl lysine isopeptide (Lys-Gly) (interchain with G-Cter in SUMO2).

It belongs to the class V-like SAM-binding methyltransferase superfamily. Histone-lysine methyltransferase family. EZ subfamily. In terms of assembly, component of the PRC2/EED-EZH2 complex, which includes EED, EZH2, SUZ12, RBBP4 and RBBP7 and possibly AEBP2. The minimum components required for methyltransferase activity of the PRC2/EED-EZH2 complex are EED, EZH2 and SUZ12. The PRC2 complex may also interact with DNMT1, DNMT3A, DNMT3B and PHF1 via the EZH2 subunit and with SIRT1 via the SUZ12 subunit. Interacts with HDAC1 and HDAC2. Binds ATRX via the SET domain. Interacts with PRAME. Interacts with CDYL. Interacts with BMAL1, CLOCK and CRY1. Interacts with DNMT3L; the interaction is direct. Interacts with EZHIP; the interaction blocks EZH2 methyltransferase activity. Interacts with ZNF263; recruited to the SIX3 promoter along with other proteins involved in chromatin modification and transcriptional corepression where it contributes to transcriptional repression. Interacts with ARMC12. Interacts with ZMYND8; the interaction is dependent on the presence of chromatin. Interacts with DDX18; this interaction inhibits the PRC2 complex. In terms of processing, phosphorylated by AKT1. Phosphorylation by AKT1 reduces methyltransferase activity. Phosphorylation at Thr-345 by CDK1 and CDK2 promotes maintenance of H3K27me3 levels at EZH2-target loci, thus leading to epigenetic gene silencing. Sumoylated. Post-translationally, glycosylated: O-GlcNAcylation at Ser-75 by OGT increases stability of EZH2 and facilitates the formation of H3K27me3 by the PRC2/EED-EZH2 complex.

The protein localises to the nucleus. It catalyses the reaction L-lysyl(27)-[histone H3] + 3 S-adenosyl-L-methionine = N(6),N(6),N(6)-trimethyl-L-lysyl(27)-[histone H3] + 3 S-adenosyl-L-homocysteine + 3 H(+). Polycomb group (PcG) protein. Catalytic subunit of the PRC2/EED-EZH2 complex, which methylates 'Lys-9' (H3K9me) and 'Lys-27' (H3K27me) of histone H3, leading to transcriptional repression of the affected target gene. Able to mono-, di- and trimethylate 'Lys-27' of histone H3 to form H3K27me1, H3K27me2 and H3K27me3, respectively. Displays a preference for substrates with less methylation, loses activity when progressively more methyl groups are incorporated into H3K27, H3K27me0 &gt; H3K27me1 &gt; H3K27me2. Compared to EZH1-containing complexes, it is more abundant in embryonic stem cells and plays a major role in forming H3K27me3, which is required for embryonic stem cell identity and proper differentiation. The PRC2/EED-EZH2 complex may also serve as a recruiting platform for DNA methyltransferases, thereby linking two epigenetic repression systems. EZH2 can also methylate non-histone proteins such as the transcription factor GATA4 and the nuclear receptor RORA. Regulates the circadian clock via histone methylation at the promoter of the circadian genes. Essential for the CRY1/2-mediated repression of the CLOCK-BMAL1 transcriptional activation of PER1/2. Involved in the di and trimethylation of 'Lys-27' of histone H3 on PER1/2 promoters which is necessary for the CRY1/2 proteins to inhibit transcription. This is Histone-lysine N-methyltransferase EZH2 (EZH2) from Macaca fascicularis (Crab-eating macaque).